Consider the following 304-residue polypeptide: Aspartate carbamoyltransferase catalytic subunit (304 aa).

Carbamoyl phosphate is bound by residues Arg53 and Thr54. Lys82 serves as a coordination point for L-aspartate. Residues Arg103, His131, and Gln134 each coordinate carbamoyl phosphate. Positions 163 and 224 each coordinate L-aspartate. The carbamoyl phosphate site is built by Leu263 and Pro264.

This sequence belongs to the aspartate/ornithine carbamoyltransferase superfamily. ATCase family. In terms of assembly, heterooligomer of catalytic and regulatory chains.

The enzyme catalyses carbamoyl phosphate + L-aspartate = N-carbamoyl-L-aspartate + phosphate + H(+). The protein operates within pyrimidine metabolism; UMP biosynthesis via de novo pathway; (S)-dihydroorotate from bicarbonate: step 2/3. Functionally, catalyzes the condensation of carbamoyl phosphate and aspartate to form carbamoyl aspartate and inorganic phosphate, the committed step in the de novo pyrimidine nucleotide biosynthesis pathway. The chain is Aspartate carbamoyltransferase catalytic subunit from Haloarcula marismortui (strain ATCC 43049 / DSM 3752 / JCM 8966 / VKM B-1809) (Halobacterium marismortui).